Consider the following 348-residue polypeptide: MNGTEGPNFYVPFSNVTGVVRSPFEQPQYYLAEPWQFSMLAAYMFLLIVLGFPINFLTLYVTVQHKKLRTPLNYILLNLAVADLFMVFGGFTTTLYTSLHGYFVFGPTGCNLEGFFATLGGEIALWSLVVLAIERYVVVCKPMSNFRFGENHAIMGVVFTWIMALACAAPPLVGWSRYIPEGMQCSCGIDYYTLKPEVNNESFVIYMFVVHFTIPMIVIFFCYGQLVFTVKEAAAQQQESATTQKAEKEVTRMVIIMVIFFLICWLPYASVAFYIFTHQGSNFGPIFMTLPAFFAKSSSIYNPVIYIMLNKQFRNCMLTTLCCGKNPLGDDDASATASKTETSQVAPA.

Met1 is modified (N-acetylmethionine). Over 1-36 (MNGTEGPNFYVPFSNVTGVVRSPFEQPQYYLAEPWQ) the chain is Extracellular. Asn2 and Asn15 each carry an N-linked (GlcNAc...) asparagine glycan. Residues 37–61 (FSMLAAYMFLLIVLGFPINFLTLYV) form a helical membrane-spanning segment. Over 62–73 (TVQHKKLRTPLN) the chain is Cytoplasmic. A helical membrane pass occupies residues 74–96 (YILLNLAVADLFMVFGGFTTTLY). At 97–110 (TSLHGYFVFGPTGC) the chain is on the extracellular side. A disulfide bridge connects residues Cys110 and Cys187. A helical membrane pass occupies residues 111–133 (NLEGFFATLGGEIALWSLVVLAI). Residues 134-136 (ERY) carry the 'Ionic lock' involved in activated form stabilization motif. Residues 134–152 (ERYVVVCKPMSNFRFGENH) lie on the Cytoplasmic side of the membrane. A helical membrane pass occupies residues 153–173 (AIMGVVFTWIMALACAAPPLV). Residues 174 to 202 (GWSRYIPEGMQCSCGIDYYTLKPEVNNES) are Extracellular-facing. Residue Glu201 coordinates Zn(2+). Residues 203–224 (FVIYMFVVHFTIPMIVIFFCYG) traverse the membrane as a helical segment. Topologically, residues 225–252 (QLVFTVKEAAAQQQESATTQKAEKEVTR) are cytoplasmic. Residues 253–274 (MVIIMVIFFLICWLPYASVAFY) form a helical membrane-spanning segment. At 275–286 (IFTHQGSNFGPI) the chain is on the extracellular side. Zn(2+) is bound at residue Gln279. The chain crosses the membrane as a helical span at residues 287–308 (FMTLPAFFAKSSSIYNPVIYIM). Lys296 is subject to N6-(retinylidene)lysine. At 309–348 (LNKQFRNCMLTTLCCGKNPLGDDDASATASKTETSQVAPA) the chain is on the cytoplasmic side. Residues Cys322 and Cys323 are each lipidated (S-palmitoyl cysteine). The interval 330–348 (DDDASATASKTETSQVAPA) is interaction with SAG. Ser334 is modified (phosphoserine). Thr336 is subject to Phosphothreonine. Ser338 carries the phosphoserine modification. Phosphothreonine occurs at positions 340 and 342. Ser343 carries the post-translational modification Phosphoserine.

The protein belongs to the G-protein coupled receptor 1 family. Opsin subfamily. As to quaternary structure, homodimer. May form a complex composed of RHO, GRK1 and RCVRN in a Ca(2+)-dependent manner; RCVRN prevents the interaction between GRK1 and RHO. Interacts with GRK1. Interacts (phosphorylated form) with SAG. Interacts with GNAT1. Interacts with GNAT3. SAG and G-proteins compete for a common binding site. Interacts with PRCD; the interaction promotes PRCD stability. Forms a complex with ASAP1 and ARF4. Forms a complex with ASAP1, RAB11A, Rabin8/RAB3IP, ARF4 and RAB11FIP3; the complex regulates Golgi-to-cilia rhodopsin/RHO transport in photoreceptors. Post-translationally, phosphorylated on some or all of the serine and threonine residues present in the C-terminal region. In terms of processing, contains one covalently linked retinal chromophore. Upon light absorption, the covalently bound 11-cis-retinal is converted to all-trans-retinal. After hydrolysis of the Schiff base and release of the covalently bound all-trans-retinal, active rhodopsin is regenerated by binding of a fresh molecule of 11-cis-retinal. In terms of tissue distribution, rod-shaped photoreceptor cells in the retina (at protein level).

Its subcellular location is the membrane. It is found in the cell projection. It localises to the cilium. The protein localises to the photoreceptor outer segment. In terms of biological role, photoreceptor required for image-forming vision at low light intensity. Required for photoreceptor cell viability after birth. Light-induced isomerization of 11-cis to all-trans retinal triggers a conformational change that activates signaling via G-proteins. Subsequent receptor phosphorylation mediates displacement of the bound G-protein alpha subunit by the arrestin SAG and terminates signaling. The protein is Rhodopsin (Rho) of Mus musculus (Mouse).